The primary structure comprises 436 residues: Phosphomethylpyrimidine synthase (436 aa).

Substrate contacts are provided by residues Asn69, Met98, Tyr127, His163, 185-187, 226-229, and Glu265; these read SRG and DACR. Residue His269 participates in Zn(2+) binding. A substrate-binding site is contributed by Tyr292. His333 is a Zn(2+) binding site. Positions 409, 412, and 416 each coordinate [4Fe-4S] cluster.

Belongs to the ThiC family. Requires [4Fe-4S] cluster as cofactor.

The enzyme catalyses 5-amino-1-(5-phospho-beta-D-ribosyl)imidazole + S-adenosyl-L-methionine = 4-amino-2-methyl-5-(phosphooxymethyl)pyrimidine + CO + 5'-deoxyadenosine + formate + L-methionine + 3 H(+). Its pathway is cofactor biosynthesis; thiamine diphosphate biosynthesis. Functionally, catalyzes the synthesis of the hydroxymethylpyrimidine phosphate (HMP-P) moiety of thiamine from aminoimidazole ribotide (AIR) in a radical S-adenosyl-L-methionine (SAM)-dependent reaction. The protein is Phosphomethylpyrimidine synthase of Clostridium perfringens (strain ATCC 13124 / DSM 756 / JCM 1290 / NCIMB 6125 / NCTC 8237 / Type A).